A 233-amino-acid polypeptide reads, in one-letter code: Homeobox protein ceh-30 (233 aa).

Over residues 50 to 85 (NNSTYSHDLDPSPQSVRSDLSTSPRASSPDRNSPMS) the composition is skewed to polar residues. 2 disordered regions span residues 50–93 (NNST…KART) and 206–233 (FQATSSSNSPSTHKSSESPQLDVSSNSD). Positions 88 to 147 (SRKARTIFTDKQLQELENTFEKQKYLSVQDRMDLAHRMGLSDTQVKTWYQNRRTKWKRQA) form a DNA-binding region, homeobox. Positions 224 to 233 (PQLDVSSNSD) are enriched in polar residues.

It is found in the nucleus. Functionally, cell-type specific anti-apoptotic transcription factor required for the sexually dimorphic survival of the male-specific CEM (cephalic male) sensory neurons during sex determination. In hermaphrodites, the homologous cells undergo programmed cell death due to transcriptional repression of ceh-30 by tra-1, the terminal regulator in the sex determination pathway. This Caenorhabditis briggsae protein is Homeobox protein ceh-30.